The chain runs to 194 residues: Imidazoleglycerol-phosphate dehydratase (194 aa).

This sequence belongs to the imidazoleglycerol-phosphate dehydratase family.

It is found in the cytoplasm. It carries out the reaction D-erythro-1-(imidazol-4-yl)glycerol 3-phosphate = 3-(imidazol-4-yl)-2-oxopropyl phosphate + H2O. It functions in the pathway amino-acid biosynthesis; L-histidine biosynthesis; L-histidine from 5-phospho-alpha-D-ribose 1-diphosphate: step 6/9. The chain is Imidazoleglycerol-phosphate dehydratase from Streptococcus sanguinis (strain SK36).